A 179-amino-acid polypeptide reads, in one-letter code: MTFDLDIKNTVRTIPDYPKPGILFRDITTLLADARAFRRAVDELVHPWAGSKIDKVAGIEARGFILGGAVAHQLSAGFVPIRKKGKLPHKTVSMSYALEYGTDEMEMHVDAVQPGERVILVDDLIATGGTAEGAVKLLRQIGATVVAACFIIDLPDLGGAAKLRALDVPVRALIAFEGH.

The protein belongs to the purine/pyrimidine phosphoribosyltransferase family. In terms of assembly, homodimer.

It is found in the cytoplasm. The enzyme catalyses AMP + diphosphate = 5-phospho-alpha-D-ribose 1-diphosphate + adenine. It functions in the pathway purine metabolism; AMP biosynthesis via salvage pathway; AMP from adenine: step 1/1. Its function is as follows. Catalyzes a salvage reaction resulting in the formation of AMP, that is energically less costly than de novo synthesis. The protein is Adenine phosphoribosyltransferase of Bradyrhizobium sp. (strain BTAi1 / ATCC BAA-1182).